Reading from the N-terminus, the 25-residue chain is Metallothionein (25 aa).

Cu(+) is bound by residues C3, C5, C11, C13, C18, C20, and C23.

This sequence belongs to the metallothionein superfamily. Type 8 family.

In terms of biological role, the metallothioneins are involved in the cellular sequestration of toxic metal ions. Binds six copper (cuprous) ions. The chain is Metallothionein from Agaricus bisporus (White button mushroom).